The chain runs to 91 residues: uncharacterized protein (91 aa).

This is an uncharacterized protein from Archaeoglobus fulgidus (strain ATCC 49558 / DSM 4304 / JCM 9628 / NBRC 100126 / VC-16).